The primary structure comprises 372 residues: Lipoyl synthase (372 aa).

The [4Fe-4S] cluster site is built by cysteine 37, cysteine 42, cysteine 48, cysteine 63, cysteine 67, cysteine 70, and serine 292. The region spanning 49 to 281 (WREGTATVML…ERAALEMGFL (233 aa)) is the Radical SAM core domain. The interval 338–372 (LTAELDPDEPRPPVAPAPASASPARLVPAASLIRR) is disordered. Residues 354–372 (APASASPARLVPAASLIRR) are compositionally biased toward low complexity.

Belongs to the radical SAM superfamily. Lipoyl synthase family. Requires [4Fe-4S] cluster as cofactor.

It is found in the cytoplasm. It carries out the reaction [[Fe-S] cluster scaffold protein carrying a second [4Fe-4S](2+) cluster] + N(6)-octanoyl-L-lysyl-[protein] + 2 oxidized [2Fe-2S]-[ferredoxin] + 2 S-adenosyl-L-methionine + 4 H(+) = [[Fe-S] cluster scaffold protein] + N(6)-[(R)-dihydrolipoyl]-L-lysyl-[protein] + 4 Fe(3+) + 2 hydrogen sulfide + 2 5'-deoxyadenosine + 2 L-methionine + 2 reduced [2Fe-2S]-[ferredoxin]. It participates in protein modification; protein lipoylation via endogenous pathway; protein N(6)-(lipoyl)lysine from octanoyl-[acyl-carrier-protein]: step 2/2. In terms of biological role, catalyzes the radical-mediated insertion of two sulfur atoms into the C-6 and C-8 positions of the octanoyl moiety bound to the lipoyl domains of lipoate-dependent enzymes, thereby converting the octanoylated domains into lipoylated derivatives. The chain is Lipoyl synthase from Sorangium cellulosum (strain So ce56) (Polyangium cellulosum (strain So ce56)).